We begin with the raw amino-acid sequence, 172 residues long: Small ribosomal subunit protein uS5 (172 aa).

The 64-residue stretch at 13-76 (LIEKMVAVNR…DQARRSMIKV (64 aa)) folds into the S5 DRBM domain.

Belongs to the universal ribosomal protein uS5 family. Part of the 30S ribosomal subunit. Contacts proteins S4 and S8.

With S4 and S12 plays an important role in translational accuracy. Its function is as follows. Located at the back of the 30S subunit body where it stabilizes the conformation of the head with respect to the body. This chain is Small ribosomal subunit protein uS5, found in Neisseria gonorrhoeae (strain ATCC 700825 / FA 1090).